Here is a 210-residue protein sequence, read N- to C-terminus: Small ribosomal subunit protein uS7 (210 aa).

Positions 1-22 (MSDEQPAEDETEEAAAESEDTQ) are enriched in acidic residues. The disordered stretch occupies residues 1–23 (MSDEQPAEDETEEAAAESEDTQE).

This sequence belongs to the universal ribosomal protein uS7 family. In terms of assembly, part of the 30S ribosomal subunit. Contacts proteins S9 and S11.

In terms of biological role, one of the primary rRNA binding proteins, it binds directly to 16S rRNA where it nucleates assembly of the head domain of the 30S subunit. Is located at the subunit interface close to the decoding center. The chain is Small ribosomal subunit protein uS7 from Halobacterium salinarum (strain ATCC 29341 / DSM 671 / R1).